The sequence spans 71 residues: Natterin-P (71 aa).

A signal peptide spans 1-18 (MKLLVLLVTLLVLSWTSA). A propeptide spanning residues 19-45 (EDLGDQEILENNEDNNHESELGEPAAQ) is cleaved from the precursor. Positions 22–31 (GDQEILENNE) are enriched in acidic residues. The tract at residues 22–54 (GDQEILENNEDNNHESELGEPAAQHTDDETSQL) is disordered. Residues Cys62 and Cys71 are joined by a disulfide bond.

Belongs to the natterin family. As to expression, expressed by the venom gland.

The protein localises to the secreted. Its activity is regulated as follows. Inhibited by tissue-kallikrein inhibitor TKI and trasylol. Plasma kallikrein inhibitor PKSI527 and classical inhibitors of serine-, metallo-, thiol- or aspartate-peptidases evokes a minor inhibition of the peptide digestion. Shows nociceptive, edema-inducing and kininogenase activity with release of kallidin from low molecular weight kininogen. The cleavage occurs at Met-Lys bonds. This is Natterin-P from Thalassophryne nattereri (Copper Joe toadfish).